We begin with the raw amino-acid sequence, 946 residues long: Clumping factor A (946 aa).

The signal sequence occupies residues 1-39 (MNMKKKEKHAIRKKSIGVASVLVGTLIGFGLLSSKEADA). Positions 9-20 (HAIRKKSIGVAS) match the YSIRK-G/S signaling motif motif. 2 disordered regions span residues 34 to 199 (SKEA…SNKD) and 528 to 917 (FNNG…SEDE). A ligand binding A region region spans residues 40–542 (SENSVTQSDS…GSGDGIDKPV (503 aa)). Residues 47-65 (SDSASNESKSNDSSSVSAA) show a composition bias toward low complexity. Residues 71–111 (TNVSDTKTSSNTNNGETSVAQNPAQQETTQSALTNATTEET) show a composition bias toward polar residues. Composition is skewed to low complexity over residues 117-131 (ATTA…ATTQ) and 142-161 (NQTS…SVNS). Over residues 162–199 (PQNSTNAENVSTTQDTSTEATPSNNESAPQSTDASNKD) the composition is skewed to polar residues. The segment covering 546 to 564 (QPDEPGEIEPIPEDSDSDP) has biased composition (acidic residues). Positions 565–597 (GSDSGSDSNSDSGSDSGSDSTSDSGSDSASDSD) are enriched in low complexity. Acidic residues predominate over residues 598 to 874 (SASDSDSASD…DSDSESDSNS (277 aa)). A compositionally biased stretch (low complexity) spans 875-893 (DSESGSNNNVVPPNSPKNG). A compositionally biased stretch (basic and acidic residues) spans 900–909 (NEAKDSKEPL). An LPXTG sorting signal motif is present at residues 909–913 (LPDTG). T912 bears the Pentaglycyl murein peptidoglycan amidated threonine mark. Positions 913-946 (GSEDEANTSLIWGLLASIGSLLLFRRKKENKDKK) are cleaved as a propeptide — removed by sortase.

The protein belongs to the serine-aspartate repeat-containing protein (SDr) family.

The protein resides in the secreted. It is found in the cell wall. Cell surface-associated protein implicated in virulence. Promotes bacterial attachment exclusively to the gamma-chain of human fibrinogen. Induces formation of bacterial clumps. The sequence is that of Clumping factor A (clfA) from Staphylococcus aureus (strain MW2).